A 406-amino-acid polypeptide reads, in one-letter code: Phosphopentomutase (406 aa).

Mn(2+) contacts are provided by D10, D305, H310, D346, H347, and H358.

The protein belongs to the phosphopentomutase family. It depends on Mn(2+) as a cofactor.

The protein localises to the cytoplasm. The enzyme catalyses 2-deoxy-alpha-D-ribose 1-phosphate = 2-deoxy-D-ribose 5-phosphate. It catalyses the reaction alpha-D-ribose 1-phosphate = D-ribose 5-phosphate. The protein operates within carbohydrate degradation; 2-deoxy-D-ribose 1-phosphate degradation; D-glyceraldehyde 3-phosphate and acetaldehyde from 2-deoxy-alpha-D-ribose 1-phosphate: step 1/2. Its function is as follows. Isomerase that catalyzes the conversion of deoxy-ribose 1-phosphate (dRib-1-P) and ribose 1-phosphate (Rib-1-P) to deoxy-ribose 5-phosphate (dRib-5-P) and ribose 5-phosphate (Rib-5-P), respectively. In Vibrio campbellii (strain ATCC BAA-1116), this protein is Phosphopentomutase.